A 590-amino-acid polypeptide reads, in one-letter code: Hyaluronan synthase 1 (590 aa).

The Cytoplasmic portion of the chain corresponds to 1 to 31 (MKDKAAATMEIPEDPGIPKNLERKRPIVWRM). The chain crosses the membrane as a helical span at residues 32-52 (IYYSFAVLLLAAFTAAYVTEF). Residues 53-60 (QILTHEDV) are Extracellular-facing. A helical membrane pass occupies residues 61-81 (LFSLGLYGLVMFLHLMMQSLF). Topologically, residues 82 to 401 (AYLEIRRINK…YNAQWWYKHH (320 aa)) are cytoplasmic. A helical transmembrane segment spans residues 402-422 (IWMTYESVVHFIFPFFITATV). Residues 423–425 (IRL) lie on the Extracellular side of the membrane. Residues 426-446 (LYASTIWNVVWLLLCIQIMSV) traverse the membrane as a helical segment. At 447–456 (LKSLYACWLR) the chain is on the cytoplasmic side. Residues 457–477 (GNPIMLLMSLYSMLYMTGLLP) form a helical membrane-spanning segment. At 478 to 505 (SKYFAMLTINKSGWGTSGRKKIVGNYMP) the chain is on the extracellular side. The chain crosses the membrane as a helical span at residues 506 to 526 (VLPLSIWMAVLCGGVGYSIYM). The Cytoplasmic portion of the chain corresponds to 527 to 543 (DCHQDWSTPEKQKELYH). A helical membrane pass occupies residues 544 to 564 (LLYGCISYTLYWVLMALMYWV). Residues 565-588 (WVKRCCRKRSQTVTLVHDIPERLV) lie on the Extracellular side of the membrane.

It belongs to the NodC/HAS family. Mg(2+) serves as cofactor.

The protein resides in the membrane. The enzyme catalyses [hyaluronan](n) + UDP-N-acetyl-alpha-D-glucosamine = N-acetyl-beta-D-glucosaminyl-(1-&gt;4)-[hyaluronan](n) + UDP + H(+). It catalyses the reaction N-acetyl-beta-D-glucosaminyl-(1-&gt;4)-[hyaluronan](n) + UDP-alpha-D-glucuronate = [hyaluronan](n+1) + UDP + H(+). The protein operates within glycan biosynthesis; hyaluronan biosynthesis. In terms of biological role, catalyzes the addition of GlcNAc or GlcUA monosaccharides to the nascent hyaluronan polymer. Therefore, it is essential to hyaluronan synthesis a major component of most extracellular matrices that has a structural role in tissues architectures and regulates cell adhesion, migration and differentiation. Also able to catalyze the synthesis of chito-oligosaccharide depending on the substrate. The chain is Hyaluronan synthase 1 (has1) from Xenopus tropicalis (Western clawed frog).